We begin with the raw amino-acid sequence, 626 residues long: UvrABC system protein C (626 aa).

The 80-residue stretch at 25-104 folds into the GIY-YIG domain; sequence TSPGVYRFSN…IKELKPRYNV (80 aa). The 36-residue stretch at 218–253 folds into the UVR domain; sequence SALLRDLSAEMQKKAKELKFEEAAALKAQIEGLKRY.

It belongs to the UvrC family. In terms of assembly, interacts with UvrB in an incision complex.

The protein resides in the cytoplasm. The UvrABC repair system catalyzes the recognition and processing of DNA lesions. UvrC both incises the 5' and 3' sides of the lesion. The N-terminal half is responsible for the 3' incision and the C-terminal half is responsible for the 5' incision. This Chlorobaculum tepidum (strain ATCC 49652 / DSM 12025 / NBRC 103806 / TLS) (Chlorobium tepidum) protein is UvrABC system protein C.